Consider the following 222-residue polypeptide: Phosphoribosylformylglycinamidine synthase subunit PurQ (222 aa).

The region spanning 3 to 222 (AAVVVFPGSN…RALTGALAAV (220 aa)) is the Glutamine amidotransferase type-1 domain. Residue cysteine 86 is the Nucleophile of the active site. Residues histidine 194 and glutamate 196 contribute to the active site.

As to quaternary structure, part of the FGAM synthase complex composed of 1 PurL, 1 PurQ and 2 PurS subunits.

It localises to the cytoplasm. It carries out the reaction N(2)-formyl-N(1)-(5-phospho-beta-D-ribosyl)glycinamide + L-glutamine + ATP + H2O = 2-formamido-N(1)-(5-O-phospho-beta-D-ribosyl)acetamidine + L-glutamate + ADP + phosphate + H(+). The enzyme catalyses L-glutamine + H2O = L-glutamate + NH4(+). It participates in purine metabolism; IMP biosynthesis via de novo pathway; 5-amino-1-(5-phospho-D-ribosyl)imidazole from N(2)-formyl-N(1)-(5-phospho-D-ribosyl)glycinamide: step 1/2. Functionally, part of the phosphoribosylformylglycinamidine synthase complex involved in the purines biosynthetic pathway. Catalyzes the ATP-dependent conversion of formylglycinamide ribonucleotide (FGAR) and glutamine to yield formylglycinamidine ribonucleotide (FGAM) and glutamate. The FGAM synthase complex is composed of three subunits. PurQ produces an ammonia molecule by converting glutamine to glutamate. PurL transfers the ammonia molecule to FGAR to form FGAM in an ATP-dependent manner. PurS interacts with PurQ and PurL and is thought to assist in the transfer of the ammonia molecule from PurQ to PurL. The protein is Phosphoribosylformylglycinamidine synthase subunit PurQ of Roseobacter denitrificans (strain ATCC 33942 / OCh 114) (Erythrobacter sp. (strain OCh 114)).